Here is a 346-residue protein sequence, read N- to C-terminus: Dihydroorotate dehydrogenase (quinone) (346 aa).

FMN-binding positions include 62–66 (AGMDK) and threonine 86. Lysine 66 provides a ligand contact to substrate. Residue 111–115 (NRMGF) coordinates substrate. FMN contacts are provided by asparagine 142 and asparagine 175. Residue asparagine 175 coordinates substrate. The Nucleophile role is filled by serine 178. Residue asparagine 180 coordinates substrate. The FMN site is built by lysine 211 and valine 239. 240 to 241 (NT) is a binding site for substrate. FMN is bound by residues glycine 261, glycine 289, and 310 to 311 (YT).

It belongs to the dihydroorotate dehydrogenase family. Type 2 subfamily. As to quaternary structure, monomer. FMN is required as a cofactor.

It is found in the cell membrane. The enzyme catalyses (S)-dihydroorotate + a quinone = orotate + a quinol. The protein operates within pyrimidine metabolism; UMP biosynthesis via de novo pathway; orotate from (S)-dihydroorotate (quinone route): step 1/1. In terms of biological role, catalyzes the conversion of dihydroorotate to orotate with quinone as electron acceptor. This is Dihydroorotate dehydrogenase (quinone) from Thermus thermophilus (strain ATCC BAA-163 / DSM 7039 / HB27).